The primary structure comprises 234 residues: Leucyl/phenylalanyl-tRNA--protein transferase (234 aa).

The protein belongs to the L/F-transferase family.

The protein resides in the cytoplasm. The catalysed reaction is N-terminal L-lysyl-[protein] + L-leucyl-tRNA(Leu) = N-terminal L-leucyl-L-lysyl-[protein] + tRNA(Leu) + H(+). It catalyses the reaction N-terminal L-arginyl-[protein] + L-leucyl-tRNA(Leu) = N-terminal L-leucyl-L-arginyl-[protein] + tRNA(Leu) + H(+). The enzyme catalyses L-phenylalanyl-tRNA(Phe) + an N-terminal L-alpha-aminoacyl-[protein] = an N-terminal L-phenylalanyl-L-alpha-aminoacyl-[protein] + tRNA(Phe). Functionally, functions in the N-end rule pathway of protein degradation where it conjugates Leu, Phe and, less efficiently, Met from aminoacyl-tRNAs to the N-termini of proteins containing an N-terminal arginine or lysine. The chain is Leucyl/phenylalanyl-tRNA--protein transferase from Escherichia coli O7:K1 (strain IAI39 / ExPEC).